The primary structure comprises 142 residues: Hemoglobin subunit alpha-1 (142 aa).

A Globin domain is found at 2–142 (VLSPADKTNI…VSTVLTSKYR (141 aa)). Histidine 59 provides a ligand contact to O2. Residue histidine 88 participates in heme b binding.

This sequence belongs to the globin family. Heterotetramer of two alpha chains and two beta chains. Red blood cells.

Involved in oxygen transport from the lung to the various peripheral tissues. This is Hemoglobin subunit alpha-1 from Arctocephalus galapagoensis (Galapagoes fur seal).